The primary structure comprises 340 residues: Insulin gene enhancer protein ISL-2B (340 aa).

LIM zinc-binding domains follow at residues 9–62 (CVGC…CKRD) and 71–125 (CAKC…RADH). Positions 172-231 (TTRVRTVLNEKQLHTLRTCYNANPRPDALMKEQLVEMTGLSPRVIRVWFQNKRCKDKKRT) form a DNA-binding region, homeobox. A compositionally biased stretch (low complexity) spans 307–317 (ESGSMGNSSGS). The segment at 307-340 (ESGSMGNSSGSDVTSLSSQLPDTPNSMVPSPMDT) is disordered. Residues 318–340 (DVTSLSSQLPDTPNSMVPSPMDT) show a composition bias toward polar residues.

The protein resides in the nucleus. In terms of biological role, binds to one of the cis-acting domain of the insulin gene enhancer. May be involved in subtype specialization of primary motoneurons. In Oncorhynchus tshawytscha (Chinook salmon), this protein is Insulin gene enhancer protein ISL-2B (isl2b).